The primary structure comprises 128 residues: Fluoride-specific ion channel FluC (128 aa).

Helical transmembrane passes span 3–23, 33–53, 69–89, and 99–119; these read LYALTAIGAGAALGAWLRWWF, TLPLGTLAANLTGGYLIGAAI, FAITGFLGGLTTFSTFSAETV, and WTFVIIFSHLTGSLVMTILGI. Na(+) is bound by residues glycine 76 and threonine 79.

The protein belongs to the fluoride channel Fluc/FEX (TC 1.A.43) family.

Its subcellular location is the cell inner membrane. The enzyme catalyses fluoride(in) = fluoride(out). With respect to regulation, na(+) is not transported, but it plays an essential structural role and its presence is essential for fluoride channel function. In terms of biological role, fluoride-specific ion channel. Important for reducing fluoride concentration in the cell, thus reducing its toxicity. The protein is Fluoride-specific ion channel FluC of Nitrosospira multiformis (strain ATCC 25196 / NCIMB 11849 / C 71).